The primary structure comprises 82 residues: ATP synthase subunit c, chloroplastic (82 aa).

2 helical membrane-spanning segments follow: residues 3-23 (PIIS…AAIG) and 57-77 (LAFM…LLFA).

It belongs to the ATPase C chain family. In terms of assembly, F-type ATPases have 2 components, F(1) - the catalytic core - and F(0) - the membrane proton channel. F(1) has five subunits: alpha(3), beta(3), gamma(1), delta(1), epsilon(1). F(0) has four main subunits: a(1), b(1), b'(1) and c(10-14). The alpha and beta chains form an alternating ring which encloses part of the gamma chain. F(1) is attached to F(0) by a central stalk formed by the gamma and epsilon chains, while a peripheral stalk is formed by the delta, b and b' chains.

Its subcellular location is the plastid. The protein resides in the chloroplast thylakoid membrane. Functionally, f(1)F(0) ATP synthase produces ATP from ADP in the presence of a proton or sodium gradient. F-type ATPases consist of two structural domains, F(1) containing the extramembraneous catalytic core and F(0) containing the membrane proton channel, linked together by a central stalk and a peripheral stalk. During catalysis, ATP synthesis in the catalytic domain of F(1) is coupled via a rotary mechanism of the central stalk subunits to proton translocation. Its function is as follows. Key component of the F(0) channel; it plays a direct role in translocation across the membrane. A homomeric c-ring of between 10-14 subunits forms the central stalk rotor element with the F(1) delta and epsilon subunits. The protein is ATP synthase subunit c, chloroplastic of Phaeodactylum tricornutum (strain CCAP 1055/1).